Consider the following 38-residue polypeptide: Cytochrome b6-f complex subunit 5 (38 aa).

Residues 5-25 (LLCGIVLGLIPVTLLGLFVDA) form a helical membrane-spanning segment.

Belongs to the PetG family. As to quaternary structure, the 4 large subunits of the cytochrome b6-f complex are cytochrome b6, subunit IV (17 kDa polypeptide, PetD), cytochrome f and the Rieske protein, while the 4 small subunits are PetG, PetL, PetM and PetN. The complex functions as a dimer.

The protein resides in the cellular thylakoid membrane. Its function is as follows. Component of the cytochrome b6-f complex, which mediates electron transfer between photosystem II (PSII) and photosystem I (PSI), cyclic electron flow around PSI, and state transitions. PetG is required for either the stability or assembly of the cytochrome b6-f complex. The protein is Cytochrome b6-f complex subunit 5 of Prochlorococcus marinus (strain MIT 9313).